Reading from the N-terminus, the 981-residue chain is Mediator of RNA polymerase II transcription subunit 5 (981 aa).

The protein belongs to the Mediator complex subunit 5 family. As to quaternary structure, component of the Mediator complex.

The protein resides in the nucleus. In terms of biological role, component of the Mediator complex, a coactivator involved in the regulated transcription of nearly all RNA polymerase II-dependent genes. Mediator functions as a bridge to convey information from gene-specific regulatory proteins to the basal RNA polymerase II transcription machinery. Mediator is recruited to promoters by direct interactions with regulatory proteins and serves as a scaffold for the assembly of a functional preinitiation complex with RNA polymerase II and the general transcription factors. The protein is Mediator of RNA polymerase II transcription subunit 5 (NUT1) of Scheffersomyces stipitis (strain ATCC 58785 / CBS 6054 / NBRC 10063 / NRRL Y-11545) (Yeast).